The chain runs to 118 residues: UPF0295 protein BC_0520 (118 aa).

A run of 2 helical transmembrane segments spans residues 12-32 and 43-63; these read IRTFALSLVFIGLFIAYLGVF and FMMVGFLAVIASTVVYFWIGM.

It belongs to the UPF0295 family.

The protein resides in the cell membrane. The chain is UPF0295 protein BC_0520 from Bacillus cereus (strain ATCC 14579 / DSM 31 / CCUG 7414 / JCM 2152 / NBRC 15305 / NCIMB 9373 / NCTC 2599 / NRRL B-3711).